Consider the following 548-residue polypeptide: Chaperonin GroEL 1 (548 aa).

ATP contacts are provided by residues 30–33, K51, 87–91, G415, 479–481, and D495; these read TLGP, DGTTT, and NAA.

The protein belongs to the chaperonin (HSP60) family. As to quaternary structure, forms a cylinder of 14 subunits composed of two heptameric rings stacked back-to-back. Interacts with the co-chaperonin GroES.

The protein resides in the cytoplasm. The catalysed reaction is ATP + H2O + a folded polypeptide = ADP + phosphate + an unfolded polypeptide.. In terms of biological role, together with its co-chaperonin GroES, plays an essential role in assisting protein folding. The GroEL-GroES system forms a nano-cage that allows encapsulation of the non-native substrate proteins and provides a physical environment optimized to promote and accelerate protein folding. The chain is Chaperonin GroEL 1 from Vibrio harveyi (Beneckea harveyi).